Consider the following 1036-residue polypeptide: Presequence protease, mitochondrial (1036 aa).

The transit peptide at 1–15 (MWRFSGRRGLCAVQR) directs the protein to the mitochondrion. Residue His104 participates in Zn(2+) binding. The Proton acceptor role is filled by Glu107. Positions 108 and 205 each coordinate Zn(2+). Residues Cys119 and Cys556 are joined by a disulfide bond. Lys759 is subject to N6-acetyllysine. Lys770 is subject to N6-acetyllysine; alternate. Residue Lys770 is modified to N6-succinyllysine; alternate. The segment at 806 to 833 (SKKERKPVRPHIVEKPTPSGPSGAAHVS) is disordered. At Lys848 the chain carries N6-succinyllysine. Lys883 is modified (N6-acetyllysine). At Lys945 the chain carries N6-succinyllysine.

It belongs to the peptidase M16 family. PreP subfamily. As to quaternary structure, monomer and homodimer; homodimerization is induced by binding of the substrate. Zn(2+) serves as cofactor. In terms of processing, a disulfide bond locks the enzyme in the closed conformation preventing substrate entry into the catalytic chamber.

The protein localises to the mitochondrion matrix. With respect to regulation, mainly exists in a closed and catalytically competent conformation but a closed-to-open switch allows substrate entry into the catalytic chamber. Substrate binding induces closure and dimerization. A disulfide bond may lock the enzyme in a closed conformation preventing substrate entry into the catalytic chamber, participating in redox regulation of the enzyme. Inhibited by metal-chelating agents. Inhibited by nickel and zinc excess, and slightly activated by manganese. In terms of biological role, metalloendopeptidase of the mitochondrial matrix that functions in peptide cleavage and degradation rather than in protein processing. Has an ATP-independent activity. Specifically cleaves peptides in the range of 5 to 65 residues. Shows a preference for cleavage after small polar residues and before basic residues, but without any positional preference. Degrades the transit peptides of mitochondrial proteins after their cleavage. Also degrades other unstructured peptides. It is also able to degrade amyloid-beta protein 40, one of the peptides produced by APP processing, when it accumulates in mitochondrion. It is a highly efficient protease, at least toward amyloid-beta protein 40. Cleaves that peptide at a specific position and is probably not processive, releasing digested peptides intermediates that can be further cleaved subsequently. It is also able to degrade amyloid-beta protein 42. The sequence is that of Presequence protease, mitochondrial from Mus musculus (Mouse).